We begin with the raw amino-acid sequence, 372 residues long: Oxysterol-binding protein 3 (372 aa).

A compositionally biased stretch (basic and acidic residues) spans 1-10 (MGKSDRKLTE). The disordered stretch occupies residues 1-25 (MGKSDRKLTEENSIENGVKPGKLTE).

The protein belongs to the OSBP family.

The chain is Oxysterol-binding protein 3 (osbC) from Dictyostelium discoideum (Social amoeba).